Consider the following 515-residue polypeptide: ADP,ATP carrier protein 1 (515 aa).

Helical transmembrane passes span 24–44 (LKKV…YTVL), 62–82 (AIPF…MLIY), 93–113 (ALFY…PTVI), 124–144 (EFAD…VAIL), 149–169 (FAAF…LMFW), 184–204 (FYAL…RAIV), 226–246 (LLMA…WWIN), 286–306 (YILL…LIEV), 329–349 (FSFW…GNVI), 358–378 (ALVT…LVIF), 383–403 (SGLV…VGAI), and 465–485 (IGAM…IWLV).

The protein belongs to the ADP/ATP translocase tlc family.

It localises to the cell membrane. In Chlamydia pneumoniae (Chlamydophila pneumoniae), this protein is ADP,ATP carrier protein 1 (tlcA).